The chain runs to 246 residues: Isoamyl acetate-hydrolyzing esterase (246 aa).

Ser-46 serves as the catalytic Nucleophile. The active-site Proton donor is the Asp-201. The active-site Proton acceptor is the His-204.

This sequence belongs to the 'GDSL' lipolytic enzyme family. IAH1 subfamily.

It localises to the cytoplasm. The catalysed reaction is 3-methylbutyl acetate + H2O = 3-methylbutanol + acetate + H(+). The protein is Isoamyl acetate-hydrolyzing esterase (iah1) of Schizosaccharomyces pombe (strain 972 / ATCC 24843) (Fission yeast).